A 253-amino-acid polypeptide reads, in one-letter code: Vitamin B12 import ATP-binding protein BtuD (253 aa).

Positions 1–236 (MTNQLMALNQ…NTLSRVFAAD (236 aa)) constitute an ABC transporter domain. Position 34–41 (34–41 (GPNGSGKS)) interacts with ATP.

The protein belongs to the ABC transporter superfamily. Vitamin B12 importer (TC 3.A.1.13.1) family. As to quaternary structure, the complex is composed of two ATP-binding proteins (BtuD), two transmembrane proteins (BtuC) and a solute-binding protein (BtuF).

The protein localises to the cell inner membrane. The enzyme catalyses an R-cob(III)alamin(out) + ATP + H2O = an R-cob(III)alamin(in) + ADP + phosphate + H(+). Functionally, part of the ABC transporter complex BtuCDF involved in vitamin B12 import. Responsible for energy coupling to the transport system. This is Vitamin B12 import ATP-binding protein BtuD from Photorhabdus laumondii subsp. laumondii (strain DSM 15139 / CIP 105565 / TT01) (Photorhabdus luminescens subsp. laumondii).